Consider the following 57-residue polypeptide: Large ribosomal subunit protein bL32c (57 aa).

As to quaternary structure, component of the chloroplast large ribosomal subunit (LSU). Mature 70S chloroplast ribosomes of higher plants consist of a small (30S) and a large (50S) subunit. The 30S small subunit contains 1 molecule of ribosomal RNA (16S rRNA) and 24 different proteins. The 50S large subunit contains 3 rRNA molecules (23S, 5S and 4.5S rRNA) and 33 different proteins.

The protein localises to the plastid. It is found in the chloroplast. Functionally, component of the chloroplast ribosome (chloro-ribosome), a dedicated translation machinery responsible for the synthesis of chloroplast genome-encoded proteins, including proteins of the transcription and translation machinery and components of the photosynthetic apparatus. The polypeptide is Large ribosomal subunit protein bL32c (rpl32) (Spinacia oleracea (Spinach)).